The following is a 314-amino-acid chain: Ficolin-2 (314 aa).

A signal peptide spans 1-17 (MALGSAALFVLTLTVHA). In terms of domain architecture, Collagen-like spans 40–96 (GCPGLPGAAGPKGEAGAKGDRGESGLPGIPGKEGPTGPKGNQGEKGIRGEKGDSGPS). The segment at 49–101 (GPKGEAGAKGDRGESGLPGIPGKEGPTGPKGNQGEKGIRGEKGDSGPSQSCAT) is disordered. The Fibrinogen C-terminal domain maps to 97–314 (QSCATGPRTC…KVSEMKVRLI (218 aa)). 2 disulfides stabilise this stretch: C99-C127 and C106-C134. Residues D250, D252, S254, and S256 each contribute to the Ca(2+) site. A disulfide bond links C258 and C271. N301 carries an N-linked (GlcNAc...) asparagine glycan.

Belongs to the ficolin lectin family. In terms of assembly, homotrimer. Interacts with elastin. Interacts with MASP1 and MASP2.

The protein localises to the secreted. Functionally, may function in innate immunity through activation of the lectin complement pathway. Calcium-dependent and GlcNAc-binding lectin. The protein is Ficolin-2 (Fcn2) of Mus musculus (Mouse).